The sequence spans 2563 residues: Highly reducing polyketide synthase 2 (2563 aa).

The Ketosynthase family 3 (KS3) domain maps to 11 to 451; sequence MSDIAIVGYS…GSNSHIVLDD (441 aa). Active-site for beta-ketoacyl synthase activity residues include C182, H317, and H357. A Malonyl-CoA:ACP transacylase (MAT) domain is found at 589 to 890; the sequence is FAFTGQGAQY…DTLSEMSSAS (302 aa). The N-terminal hotdog fold stretch occupies residues 970 to 1101; it reads GELLGVRVSD…ANISVEFQDN (132 aa). One can recognise a PKS/mFAS DH domain in the interval 970–1269; that stretch reads GELLGVRVSD…TSAVSGGITH (300 aa). The active-site Proton acceptor; for dehydratase activity is the H1002. The C-terminal hotdog fold stretch occupies residues 1126–1269; sequence TLPIDPRVFY…TSAVSGGITH (144 aa). D1186 (proton donor; for dehydratase activity) is an active-site residue. The segment at 1296–1618 is methyltransferase (CMet) domain; it reads FAANAVPKDD…FSGNDLVIRD (323 aa). Residues 1858 to 2168 form the Enoyl reductase (ER) domain; the sequence is GSLDSLQFVE…QEDTSERVIV (311 aa). The region spanning 2192–2370 is the Ketoreductase (KR) domain; the sequence is STYLVAGGSG…ALSLDIGWMS (179 aa). A Carrier domain is found at 2480 to 2561; the sequence is SDARERQQVV…GVAEVVEARS (82 aa). S2521 carries the O-(pantetheine 4'-phosphoryl)serine modification.

It depends on pantetheine 4'-phosphate as a cofactor.

It functions in the pathway secondary metabolite biosynthesis. Functionally, highly reducing polyketide synthase; part of the gene cluster that mediates the biosynthesis of the tetraketides fugralins such as linear fugralin A and cyclic fugralin B, volatile compounds that play a role in the asexual reproductive cycle but are not involved in pathogenicity. One of the key features of fugralins is the presence of a double methyl group, which is only rarely encountered in fungal secondary metabolites. As the fugralins cluster does not contain an independent methyltransferase, the PKS FGR1 is probably responsible for adding two methyl groups to the same carbon atom. Fugralin B is similar to fugralin A except for a cyclization between the carboxylic acid C-8 and the alcohol on C-4 resulting in a six membered lactone ring, probably catalyzed by the cyclase FGR4. The exact role of the individual cluster genes remains unknown and further work is needed to unravel the biosynthetic pathway. This is Highly reducing polyketide synthase 2 from Gibberella zeae (strain ATCC MYA-4620 / CBS 123657 / FGSC 9075 / NRRL 31084 / PH-1) (Wheat head blight fungus).